We begin with the raw amino-acid sequence, 325 residues long: ATP-dependent 6-phosphofructokinase (325 aa).

Glycine 12 provides a ligand contact to ATP. ADP is bound at residue 22–26 (RTIVK). ATP is bound by residues 73–74 (RY) and 103–106 (GDGS). Aspartate 104 contributes to the Mg(2+) binding site. 126–128 (TID) is a binding site for substrate. Aspartate 128 serves as the catalytic Proton acceptor. Arginine 155 provides a ligand contact to ADP. 170 to 172 (MGH) is a substrate binding site. ADP-binding positions include 186–188 (GAE), lysine 213, and 215–217 (KRS). Substrate is bound by residues glutamate 224, arginine 246, and 252–255 (HTQR).

This sequence belongs to the phosphofructokinase type A (PFKA) family. ATP-dependent PFK group I subfamily. Prokaryotic clade 'B1' sub-subfamily. Homotetramer. The cofactor is Mg(2+).

It localises to the cytoplasm. The catalysed reaction is beta-D-fructose 6-phosphate + ATP = beta-D-fructose 1,6-bisphosphate + ADP + H(+). It participates in carbohydrate degradation; glycolysis; D-glyceraldehyde 3-phosphate and glycerone phosphate from D-glucose: step 3/4. Allosterically activated by ADP and other diphosphonucleosides, and allosterically inhibited by phosphoenolpyruvate. Catalyzes the phosphorylation of D-fructose 6-phosphate to fructose 1,6-bisphosphate by ATP, the first committing step of glycolysis. This chain is ATP-dependent 6-phosphofructokinase, found in Mycoplasma mobile (strain ATCC 43663 / 163K / NCTC 11711) (Mesomycoplasma mobile).